Reading from the N-terminus, the 294-residue chain is Endonuclease 3 (294 aa).

Positions 1 to 24 are cleaved as a signal peptide; the sequence is MGWSLRMWIVSILVLTQLVNGALC. 2 residues coordinate a divalent metal cation: Trp25 and His30. 25-30 contributes to the substrate binding site; it reads WGDAGH. Cysteines 34 and 65 form a disulfide. The a divalent metal cation site is built by Asp69 and His84. Substrate contacts are provided by residues 69–75, 84–87, and 94–99; these read DEIKKLP, HFAD, and NYEYSR. 3 cysteine pairs are disulfide-bonded: Cys93-Cys241, Cys101-Cys106, and Cys221-Cys228. The substrate site is built by Asn113 and Tyr131. A glycan (N-linked (GlcNAc...) asparagine) is linked at Asn113. N-linked (GlcNAc...) asparagine glycosylation occurs at Asn132. Positions 142, 146, 152, 176, and 180 each coordinate a divalent metal cation. The segment at 142–191 is substrate binding; sequence HYMGDIHQPLHEGFIGDLGGNKIKVHWYNQETNLHRVWDDMIIESALETY. Asn193, Asn224, and Asn247 each carry an N-linked (GlcNAc...) asparagine glycan. Residues 279-294 constitute a propeptide, removed in mature form; it reads GTLNRIFSAKRKLARA.

The protein belongs to the nuclease type I family. Monomer. Zn(2+) is required as a cofactor. Requires Mn(2+) as cofactor.

It catalyses the reaction Endonucleolytic cleavage to 5'-phosphomononucleotide and 5'-phosphooligonucleotide end-products.. In terms of biological role, endonuclease that can use RNA and single-stranded DNA as substrates. In contradiction with PubMed:23620482, cannot hydrolyze single-stranded DNA and does not cleave mismatches. This Arabidopsis thaliana (Mouse-ear cress) protein is Endonuclease 3.